Reading from the N-terminus, the 528-residue chain is Probable rhamnogalacturonate lyase A (528 aa).

The N-terminal stretch at 1-20 (MFFQTGLLLSLSLWTKVAYA) is a signal peptide. 2 cysteine pairs are disulfide-bonded: Cys50/Cys93 and Cys184/Cys193. An N-linked (GlcNAc...) asparagine glycan is attached at Asn56. Residue Asn351 is glycosylated (N-linked (GlcNAc...) asparagine).

Belongs to the polysaccharide lyase 4 family.

The protein resides in the secreted. It catalyses the reaction Endotype eliminative cleavage of L-alpha-rhamnopyranosyl-(1-&gt;4)-alpha-D-galactopyranosyluronic acid bonds of rhamnogalacturonan I domains in ramified hairy regions of pectin leaving L-rhamnopyranose at the reducing end and 4-deoxy-4,5-unsaturated D-galactopyranosyluronic acid at the non-reducing end.. Pectinolytic enzymes consist of four classes of enzymes: pectin lyase, polygalacturonase, pectin methylesterase and rhamnogalacturonase. Degrades the rhamnogalacturonan I (RG-I) backbone of pectin. Active against linseed rhamnogalacturonan. The chain is Probable rhamnogalacturonate lyase A (rglA) from Aspergillus clavatus (strain ATCC 1007 / CBS 513.65 / DSM 816 / NCTC 3887 / NRRL 1 / QM 1276 / 107).